We begin with the raw amino-acid sequence, 75 residues long: Cytochrome c oxidase assembly factor 5 (75 aa).

Residues 28-66 form the CHCH domain; it reads QHDCVVKEGKKPSECLKEGHCRSMQVAFFECKRSMLDTR. Positions 31–42 match the Cx10C motif motif; that stretch reads CVVKEGKKPSEC. 2 cysteine pairs are disulfide-bonded: cysteine 31–cysteine 58 and cysteine 42–cysteine 48. The short motif at 48-58 is the Cx9C motif element; the sequence is CRSMQVAFFEC.

Belongs to the PET191 family.

Its function is as follows. Involved in an early step of the mitochondrial complex IV assembly process. This is Cytochrome c oxidase assembly factor 5 (coa5) from Danio rerio (Zebrafish).